The following is a 31-amino-acid chain: Photosystem II reaction center protein T (31 aa).

Residues 3–23 form a helical membrane-spanning segment; the sequence is SFAYILILGLAIATLFFAIAF.

It belongs to the PsbT family. In terms of assembly, PSII is composed of 1 copy each of membrane proteins PsbA, PsbB, PsbC, PsbD, PsbE, PsbF, PsbH, PsbI, PsbJ, PsbK, PsbL, PsbM, PsbT, PsbX, PsbY, PsbZ, Psb30/Ycf12, peripheral proteins PsbO, CyanoQ (PsbQ), PsbU, PsbV and a large number of cofactors. It forms dimeric complexes.

It localises to the cellular thylakoid membrane. Found at the monomer-monomer interface of the photosystem II (PS II) dimer, plays a role in assembly and dimerization of PSII. PSII is a light-driven water plastoquinone oxidoreductase, using light energy to abstract electrons from H(2)O, generating a proton gradient subsequently used for ATP formation. In Synechococcus sp. (strain CC9311), this protein is Photosystem II reaction center protein T.